The primary structure comprises 108 residues: MLKTTLLFFATALAEIIGCFLPYLWLKKSASAWLLLPAAASLMLFVWLLTLHPAASGRVYAAYGGVYVATALLWLRVVDGVKLSALDWLGAGVALAGMLIIVSGWRAA.

The next 4 membrane-spanning stretches (helical) occupy residues 6–26, 31–51, 61–81, and 85–105; these read LLFFATALAEIIGCFLPYLWL, SAWLLLPAAASLMLFVWLLTL, AAYGGVYVATALLWLRVVDGV, and ALDWLGAGVALAGMLIIVSGW.

This sequence belongs to the UPF0060 family.

The protein localises to the cell inner membrane. The polypeptide is UPF0060 membrane protein Spro_2289 (Serratia proteamaculans (strain 568)).